Here is a 171-residue protein sequence, read N- to C-terminus: Thioredoxin-2 (171 aa).

Residues 41 to 169 enclose the Thioredoxin domain; sequence AFNASPSTSQ…LQALISANHP (129 aa). Cysteines 95 and 98 form a disulfide.

It belongs to the thioredoxin family.

The protein localises to the cytoplasm. It is found in the vacuole. Thioredoxin involved in responses to oxidative and cell wall stresses. Plays an important role in appressorium formation on hyphal tips. TRX2 may affect invasive growth via the MST11-MST7-PMK1 pathway since it is required for the proper folding or dimerization of MAPKK MST7. The protein is Thioredoxin-2 of Pyricularia oryzae (strain 70-15 / ATCC MYA-4617 / FGSC 8958) (Rice blast fungus).